Reading from the N-terminus, the 271-residue chain is ATP synthase subunit a (271 aa).

Transmembrane regions (helical) follow at residues 40 to 60 (TINI…LVLF), 100 to 120 (LIAP…LMDL), 146 to 166 (DVNV…FYNI), 220 to 240 (LIFI…LNVP), and 242 to 262 (AIFH…LTIV).

This sequence belongs to the ATPase A chain family. In terms of assembly, F-type ATPases have 2 components, CF(1) - the catalytic core - and CF(0) - the membrane proton channel. CF(1) has five subunits: alpha(3), beta(3), gamma(1), delta(1), epsilon(1). CF(0) has three main subunits: a(1), b(2) and c(9-12). The alpha and beta chains form an alternating ring which encloses part of the gamma chain. CF(1) is attached to CF(0) by a central stalk formed by the gamma and epsilon chains, while a peripheral stalk is formed by the delta and b chains.

The protein localises to the cell inner membrane. Its function is as follows. Key component of the proton channel; it plays a direct role in the translocation of protons across the membrane. The polypeptide is ATP synthase subunit a (Shigella flexneri).